The sequence spans 258 residues: Imidazole glycerol phosphate synthase subunit HisF (258 aa).

Residues aspartate 11 and aspartate 130 contribute to the active site.

It belongs to the HisA/HisF family. As to quaternary structure, heterodimer of HisH and HisF.

It localises to the cytoplasm. The enzyme catalyses 5-[(5-phospho-1-deoxy-D-ribulos-1-ylimino)methylamino]-1-(5-phospho-beta-D-ribosyl)imidazole-4-carboxamide + L-glutamine = D-erythro-1-(imidazol-4-yl)glycerol 3-phosphate + 5-amino-1-(5-phospho-beta-D-ribosyl)imidazole-4-carboxamide + L-glutamate + H(+). Its pathway is amino-acid biosynthesis; L-histidine biosynthesis; L-histidine from 5-phospho-alpha-D-ribose 1-diphosphate: step 5/9. In terms of biological role, IGPS catalyzes the conversion of PRFAR and glutamine to IGP, AICAR and glutamate. The HisF subunit catalyzes the cyclization activity that produces IGP and AICAR from PRFAR using the ammonia provided by the HisH subunit. The protein is Imidazole glycerol phosphate synthase subunit HisF of Sodalis glossinidius (strain morsitans).